The primary structure comprises 467 residues: Solute carrier family 52, riboflavin transporter, member 3 (467 aa).

At 1–2 (MA) the chain is on the cytoplasmic side. A helical membrane pass occupies residues 3 to 23 (FLIHLLVCTFGMGSWVAINGL). At 24 to 43 (WVELPLLVTELPEGWYLPSY) the chain is on the extracellular side. The chain crosses the membrane as a helical span at residues 44–64 (LTVIIQLANVGPLLVTLLHHF). Residues 65–71 (RPGCLSE) lie on the Cytoplasmic side of the membrane. The helical transmembrane segment at 72-92 (VAVVFTVLGVGTIACTLFAFL) threads the bilayer. The Extracellular segment spans residues 93–105 (WNVTSWVLGSRHS). Asn-94 is a glycosylation site (N-linked (GlcNAc...) asparagine). Residues 106–126 (IAFLVLTFFLALVDCTSSVTF) form a helical membrane-spanning segment. Residues 127-137 (LPFMSRLPTYY) lie on the Cytoplasmic side of the membrane. Residues 138–158 (LTTFFVGEGLSGLLPALVALA) form a helical membrane-spanning segment. Over 159–220 (QGSGLTTCVN…SRYLPANFSP (62 aa)) the chain is Extracellular. N-linked (GlcNAc...) asparagine glycosylation is present at Asn-168. The chain crosses the membrane as a helical span at residues 221-241 (LVFFLLLSFMMACCFISFFFL). The Cytoplasmic portion of the chain corresponds to 242-294 (QRQPKRWEASIEDLLTSQVTLNSIRPQEGKDLGPPEESGKAQDPPEEKTAPQH). A Phosphoserine modification is found at Ser-251. Residues 266–288 (RPQEGKDLGPPEESGKAQDPPEE) form a disordered region. Over residues 268–288 (QEGKDLGPPEESGKAQDPPEE) the composition is skewed to basic and acidic residues. The helical transmembrane segment at 295–315 (LAHLTFIYVLVAFVNALTNGV) threads the bilayer. The Extracellular segment spans residues 316 to 333 (LPSVQTYSCLSYGPVAYH). Residues 334 to 354 (LSATLSSMASPLTCFLSIFLP) form a helical membrane-spanning segment. Topologically, residues 355 to 359 (NRSLP) are cytoplasmic. The chain crosses the membrane as a helical span at residues 360-380 (FLGVLAVLGTSFGAYNMAMAV). At 381-394 (MSPCPFMQGHWGGE) the chain is on the extracellular side. A helical membrane pass occupies residues 395-415 (VLIVVSWVLFTGCLSYVKVML). At 416-425 (GVILRDHSRS) the chain is on the cytoplasmic side. The helical transmembrane segment at 426 to 446 (ALLWCGAAVQLGSLLGAVVMF) threads the bilayer. Over 447-467 (PLVNVLRLFSSADFCSLQCSA) the chain is Extracellular.

This sequence belongs to the riboflavin transporter family.

The protein localises to the cell membrane. The catalysed reaction is riboflavin(in) = riboflavin(out). Functionally, plasma membrane transporter mediating the uptake by cells of the water soluble vitamin B2/riboflavin that plays a key role in biochemical oxidation-reduction reactions of the carbohydrate, lipid, and amino acid metabolism. In Bos taurus (Bovine), this protein is Solute carrier family 52, riboflavin transporter, member 3 (SLC52A3).